The chain runs to 124 residues: Fluoride-specific ion channel FluC (124 aa).

The next 4 helical transmembrane spans lie at 4 to 24 (IVLL…LAGL), 35 to 55 (LGTF…WGVC), 67 to 87 (VVLL…TFES), and 96 to 116 (WLAF…LLWL). Na(+)-binding residues include glycine 75 and threonine 78.

It belongs to the fluoride channel Fluc/FEX (TC 1.A.43) family.

Its subcellular location is the cell inner membrane. It catalyses the reaction fluoride(in) = fluoride(out). With respect to regulation, na(+) is not transported, but it plays an essential structural role and its presence is essential for fluoride channel function. Fluoride-specific ion channel. Important for reducing fluoride concentration in the cell, thus reducing its toxicity. This Nitratidesulfovibrio vulgaris (strain DSM 19637 / Miyazaki F) (Desulfovibrio vulgaris) protein is Fluoride-specific ion channel FluC.